Reading from the N-terminus, the 70-residue chain is SPbeta prophage-derived uncharacterized HTH-type transcriptional regulator YopO (70 aa).

The 55-residue stretch at 5 to 59 (IKQLMVKRGITIEELSRETMIDMQTLNKIIEMPDESDVTTIKLIALVLNVSIDEL) folds into the HTH cro/C1-type domain. The H-T-H motif DNA-binding region spans 16–35 (IEELSRETMIDMQTLNKIIE).

The polypeptide is SPbeta prophage-derived uncharacterized HTH-type transcriptional regulator YopO (yopO) (Bacillus subtilis (strain 168)).